Here is an 87-residue protein sequence, read N- to C-terminus: MSERNNRKVLVGRVVSDKMDKTITVLVETYKKHPLYGKRVKYSKKYKAHDENNVAKVGDIVKIMETRPLSATKRFRLVEVVEKAVIV.

This sequence belongs to the universal ribosomal protein uS17 family. As to quaternary structure, part of the 30S ribosomal subunit.

Its function is as follows. One of the primary rRNA binding proteins, it binds specifically to the 5'-end of 16S ribosomal RNA. The sequence is that of Small ribosomal subunit protein uS17 from Anoxybacillus flavithermus (strain DSM 21510 / WK1).